A 246-amino-acid chain; its full sequence is 7-cyano-7-deazaguanine synthase (246 aa).

24–34 (FSGGLDSTTVL) serves as a coordination point for ATP. Residues C209, C219, C222, and C225 each contribute to the Zn(2+) site.

This sequence belongs to the QueC family. The cofactor is Zn(2+).

The catalysed reaction is 7-carboxy-7-deazaguanine + NH4(+) + ATP = 7-cyano-7-deazaguanine + ADP + phosphate + H2O + H(+). It participates in purine metabolism; 7-cyano-7-deazaguanine biosynthesis. Its function is as follows. Catalyzes the ATP-dependent conversion of 7-carboxy-7-deazaguanine (CDG) to 7-cyano-7-deazaguanine (preQ(0)). This Polynucleobacter asymbioticus (strain DSM 18221 / CIP 109841 / QLW-P1DMWA-1) (Polynucleobacter necessarius subsp. asymbioticus) protein is 7-cyano-7-deazaguanine synthase.